Reading from the N-terminus, the 967-residue chain is Vacuolar membrane protease (967 aa).

Residues 1–16 (MARPSLSRSNPLGFTP) are Cytoplasmic-facing. The helical transmembrane segment at 17 to 37 (WPVTVITAVVYLALVVPLLVV) threads the bilayer. The Vacuolar segment spans residues 38–387 (HHVVPSAPSS…SAFVVFELHT (350 aa)). N-linked (GlcNAc...) asparagine glycans are attached at residues Asn-53 and Asn-119. Residues His-171 and Asp-183 each coordinate Zn(2+). Glu-217 serves as the catalytic Proton acceptor. Residues Glu-218, Glu-243, and His-316 each contribute to the Zn(2+) site. The chain crosses the membrane as a helical span at residues 388 to 408 (LFALSVTLLVVAPLVLLVTSI). Residues 409 to 441 (ALNRADKMYLFRASASPEDSDGSEAVLLHGVRG) lie on the Cytoplasmic side of the membrane. Residues 442-462 (FFRFPFLLVIPTAVTVGLAYL) traverse the membrane as a helical segment. Residues 463–472 (VTKFNPYIIH) are Vacuolar-facing. The chain crosses the membrane as a helical span at residues 473–493 (SSEYAVWSMMISAWVFLAWFV). Residues 494–507 (SRVADFARPSAFHR) lie on the Cytoplasmic side of the membrane. Residues 508-528 (VYTLTWLFLVEWVLLVISTVY) traverse the membrane as a helical segment. Residues 529–532 (ENKY) lie on the Vacuolar side of the membrane. Residues 533-553 (GLAGGYFVFFAFAGTFLATWI) form a helical membrane-spanning segment. The Cytoplasmic segment spans residues 554 to 663 (SYLELFALPR…WSIHLPKWVW (110 aa)). Residues 579–612 (SSHGSRLGTASGEDVEDGEDEDEDDDGTTAEATE) are disordered. The span at 591-606 (EDVEDGEDEDEDDDGT) shows a compositional bias: acidic residues. A helical membrane pass occupies residues 664 to 684 (VLQFLLTAPLVLTFVGPLALL). The Vacuolar segment spans residues 685 to 700 (LTSALRQTGQDGSSSL). Residues 701-721 (FIYIAVAALTTLLFIPLLPFI) form a helical membrane-spanning segment. At 722 to 727 (HRYTHH) the chain is on the cytoplasmic side. The helical transmembrane segment at 728–748 (IPLFLLCVFAGTLIYNLVAFP) threads the bilayer. The Vacuolar segment spans residues 749–967 (FSPANRLKLF…LVEGSRRFEI (219 aa)). Asn-795 and Asn-832 each carry an N-linked (GlcNAc...) asparagine glycan.

It belongs to the peptidase M28 family. Zn(2+) is required as a cofactor.

The protein localises to the vacuole membrane. In terms of biological role, may be involved in vacuolar sorting and osmoregulation. The chain is Vacuolar membrane protease from Neosartorya fischeri (strain ATCC 1020 / DSM 3700 / CBS 544.65 / FGSC A1164 / JCM 1740 / NRRL 181 / WB 181) (Aspergillus fischerianus).